Consider the following 741-residue polypeptide: Ribosome-releasing factor 2, mitochondrial (741 aa).

The transit peptide at 1-29 (MLKYEFLHGLQKRSHYLRQLSGQFFSRSY) directs the protein to the mitochondrion. A tr-type G domain is found at 31–310 (SKIRNIGILA…AVNSYLPAPE (280 aa)). Residues 40–47 (AHIDAGKT), 104–108 (DTPGH), and 158–161 (NKMD) contribute to the GTP site.

This sequence belongs to the TRAFAC class translation factor GTPase superfamily. Classic translation factor GTPase family. EF-G/EF-2 subfamily.

Its subcellular location is the mitochondrion. Mitochondrial GTPase that mediates the disassembly of ribosomes from messenger RNA at the termination of mitochondrial protein biosynthesis. Not involved in the GTP-dependent ribosomal translocation step during translation elongation. The protein is Ribosome-releasing factor 2, mitochondrial of Drosophila ananassae (Fruit fly).